Consider the following 271-residue polypeptide: Phosphoribosylformylglycinamidine synthase subunit PurQ (271 aa).

The Glutamine amidotransferase type-1 domain maps to 7–253 (KVAVLRMEGT…FGYQVGRREG (247 aa)). The Nucleophile role is filled by cysteine 104. Active-site residues include histidine 238 and glutamate 240.

In terms of assembly, part of the FGAM synthase complex composed of 1 PurL, 1 PurQ and 2 PurS subunits.

The protein localises to the cytoplasm. The catalysed reaction is N(2)-formyl-N(1)-(5-phospho-beta-D-ribosyl)glycinamide + L-glutamine + ATP + H2O = 2-formamido-N(1)-(5-O-phospho-beta-D-ribosyl)acetamidine + L-glutamate + ADP + phosphate + H(+). The enzyme catalyses L-glutamine + H2O = L-glutamate + NH4(+). It functions in the pathway purine metabolism; IMP biosynthesis via de novo pathway; 5-amino-1-(5-phospho-D-ribosyl)imidazole from N(2)-formyl-N(1)-(5-phospho-D-ribosyl)glycinamide: step 1/2. Its function is as follows. Part of the phosphoribosylformylglycinamidine synthase complex involved in the purines biosynthetic pathway. Catalyzes the ATP-dependent conversion of formylglycinamide ribonucleotide (FGAR) and glutamine to yield formylglycinamidine ribonucleotide (FGAM) and glutamate. The FGAM synthase complex is composed of three subunits. PurQ produces an ammonia molecule by converting glutamine to glutamate. PurL transfers the ammonia molecule to FGAR to form FGAM in an ATP-dependent manner. PurS interacts with PurQ and PurL and is thought to assist in the transfer of the ammonia molecule from PurQ to PurL. This chain is Phosphoribosylformylglycinamidine synthase subunit PurQ, found in Archaeoglobus fulgidus (strain ATCC 49558 / DSM 4304 / JCM 9628 / NBRC 100126 / VC-16).